Reading from the N-terminus, the 161-residue chain is Putative pre-16S rRNA nuclease (161 aa).

It belongs to the YqgF nuclease family.

The protein resides in the cytoplasm. Functionally, could be a nuclease involved in processing of the 5'-end of pre-16S rRNA. This chain is Putative pre-16S rRNA nuclease, found in Bradyrhizobium diazoefficiens (strain JCM 10833 / BCRC 13528 / IAM 13628 / NBRC 14792 / USDA 110).